The sequence spans 198 residues: Alpha-S1-casein (198 aa).

The N-terminal stretch at 1-15 (MKLLILTCLVASAVA) is a signal peptide. Disordered stretches follow at residues 28–47 (QTQRGGSSSSSSSEERLKEE) and 71–97 (SESTEQREASSISSSEEVVPKNTEQKH). Phosphoserine occurs at positions 39, 80, 81, 83, 84, and 85.

This sequence belongs to the alpha-casein family. In terms of tissue distribution, mammary gland specific. Secreted in milk.

Its subcellular location is the secreted. Important role in the capacity of milk to transport calcium phosphate. This is Alpha-S1-casein (CSN1S1) from Cavia porcellus (Guinea pig).